A 221-amino-acid polypeptide reads, in one-letter code: Tetraspanin-2 (221 aa).

The Cytoplasmic segment spans residues 1–13; that stretch reads MGRFRGGLRCIKY. Residues 14–34 traverse the membrane as a helical segment; the sequence is LLLGFNLLFWLAGSAVIAFGL. The Extracellular segment spans residues 35 to 54; that stretch reads WFRFGGTIKDLSSEEKSPEY. The chain crosses the membrane as a helical span at residues 55-75; that stretch reads FYVGLYVLVGAGALMMAVGFF. The Cytoplasmic portion of the chain corresponds to 76–90; the sequence is GCCGAMRESQCVLGS. A helical membrane pass occupies residues 91–111; sequence FFTCLLVIFAAEVTTGVFAFI. Topologically, residues 112-188 are extracellular; that stretch reads GKDVAIRHVQ…ETIISVKLQL (77 aa). Asn139 is a glycosylation site (N-linked (GlcNAc...) asparagine). A helical transmembrane segment spans residues 189-209; it reads IGIVGIGIAGLTIFGMIFSMV. Residues 210–221 are Cytoplasmic-facing; the sequence is LCCAIRNSRDVI.

The protein belongs to the tetraspanin (TM4SF) family. In terms of tissue distribution, expression is restricted to the nervous system.

The protein localises to the membrane. Functionally, may play a role in signalling in oligodendrocytes in the early stages of their terminal differentiation into myelin-forming glia and may also function in stabilizing the mature sheath. The protein is Tetraspanin-2 (Tspan2) of Rattus norvegicus (Rat).